The primary structure comprises 42 residues: Photosystem I reaction center subunit IX (42 aa).

Residues 7 to 27 (YLSVAPVLSTLWFGALAGLLI) traverse the membrane as a helical segment.

The protein belongs to the PsaJ family.

Its subcellular location is the plastid. The protein localises to the chloroplast thylakoid membrane. Its function is as follows. May help in the organization of the PsaE and PsaF subunits. The polypeptide is Photosystem I reaction center subunit IX (Platanus occidentalis (Sycamore)).